The primary structure comprises 270 residues: Thiazole synthase (270 aa).

The Schiff-base intermediate with DXP role is filled by K112. 1-deoxy-D-xylulose 5-phosphate is bound by residues G173, 199–200, and 221–222; these read AG and NS.

Belongs to the ThiG family. As to quaternary structure, homotetramer. Forms heterodimers with either ThiH or ThiS.

It localises to the cytoplasm. The enzyme catalyses [ThiS sulfur-carrier protein]-C-terminal-Gly-aminoethanethioate + 2-iminoacetate + 1-deoxy-D-xylulose 5-phosphate = [ThiS sulfur-carrier protein]-C-terminal Gly-Gly + 2-[(2R,5Z)-2-carboxy-4-methylthiazol-5(2H)-ylidene]ethyl phosphate + 2 H2O + H(+). It participates in cofactor biosynthesis; thiamine diphosphate biosynthesis. Functionally, catalyzes the rearrangement of 1-deoxy-D-xylulose 5-phosphate (DXP) to produce the thiazole phosphate moiety of thiamine. Sulfur is provided by the thiocarboxylate moiety of the carrier protein ThiS. In vitro, sulfur can be provided by H(2)S. This is Thiazole synthase from Pseudomonas putida (strain ATCC 700007 / DSM 6899 / JCM 31910 / BCRC 17059 / LMG 24140 / F1).